A 37-amino-acid polypeptide reads, in one-letter code: Large ribosomal subunit protein bL36c (37 aa).

This sequence belongs to the bacterial ribosomal protein bL36 family.

It is found in the plastid. The protein resides in the cyanelle. The protein is Large ribosomal subunit protein bL36c (rpl36) of Cyanophora paradoxa.